The primary structure comprises 1445 residues: DNA-directed RNA polymerase subunit beta'' (1445 aa).

Positions 220, 293, 300, and 303 each coordinate Zn(2+).

The protein belongs to the RNA polymerase beta' chain family. RpoC2 subfamily. In plastids the minimal PEP RNA polymerase catalytic core is composed of four subunits: alpha, beta, beta', and beta''. When a (nuclear-encoded) sigma factor is associated with the core the holoenzyme is formed, which can initiate transcription. The cofactor is Zn(2+).

The protein localises to the plastid. It is found in the chloroplast. It catalyses the reaction RNA(n) + a ribonucleoside 5'-triphosphate = RNA(n+1) + diphosphate. DNA-dependent RNA polymerase catalyzes the transcription of DNA into RNA using the four ribonucleoside triphosphates as substrates. The sequence is that of DNA-directed RNA polymerase subunit beta'' from Anthoceros angustus (Hornwort).